The chain runs to 347 residues: NADH-ubiquinone oxidoreductase chain 2 (347 aa).

11 helical membrane passes run Met1–Met21, His25–Met45, Tyr59–Leu79, Ile96–Pro116, Ile122–Leu142, Ile145–Gly165, Ile178–Pro198, Thr201–Leu221, Ala237–Leu257, Ile276–Leu296, and Val326–Leu346.

Belongs to the complex I subunit 2 family. Core subunit of respiratory chain NADH dehydrogenase (Complex I) which is composed of 45 different subunits. Interacts with TMEM242.

It localises to the mitochondrion inner membrane. It catalyses the reaction a ubiquinone + NADH + 5 H(+)(in) = a ubiquinol + NAD(+) + 4 H(+)(out). Functionally, core subunit of the mitochondrial membrane respiratory chain NADH dehydrogenase (Complex I) which catalyzes electron transfer from NADH through the respiratory chain, using ubiquinone as an electron acceptor. Essential for the catalytic activity and assembly of complex I. In Boneia bidens (Manado fruit bat), this protein is NADH-ubiquinone oxidoreductase chain 2.